Consider the following 444-residue polypeptide: Probable glycolate oxidase iron-sulfur subunit (444 aa).

2 4Fe-4S ferredoxin-type domains span residues 14 to 46 (FKERMDEGELLNCMRCGFCLPSCPTYIESGFQE) and 69 to 100 (EDVERSLSLCLGCRACEPVCPSGVKYGQLLEE). Residues C26, C29, C32, C36, C78, C81, C84, and C88 each coordinate [4Fe-4S] cluster.

In terms of assembly, the glycolate oxidase likely consists of several subunits including GlcD and GlcF. The cofactor is [4Fe-4S] cluster.

It localises to the cell membrane. It catalyses the reaction glycolate + A = glyoxylate + AH2. It carries out the reaction (R)-lactate + A = pyruvate + AH2. In terms of biological role, component of a complex that catalyzes the oxidation of glycolate to glyoxylate. Is also able to oxidize D-lactate ((R)-lactate). Does not link directly to O(2), and 2,6-dichloroindophenol (DCIP) and phenazine methosulfate (PMS) can act as artificial electron acceptors in vitro, but the physiological molecule that functions as primary electron acceptor during glycolate oxidation is unknown. In Bacillus subtilis (strain 168), this protein is Probable glycolate oxidase iron-sulfur subunit (glcF).